We begin with the raw amino-acid sequence, 442 residues long: D-serine dehydratase (442 aa).

K118 carries the post-translational modification N6-(pyridoxal phosphate)lysine.

The protein belongs to the serine/threonine dehydratase family. DsdA subfamily. In terms of assembly, monomer. Requires pyridoxal 5'-phosphate as cofactor.

It carries out the reaction D-serine = pyruvate + NH4(+). This is D-serine dehydratase from Escherichia coli (strain 55989 / EAEC).